The following is a 214-amino-acid chain: Peroxiredoxin 2 (214 aa).

A Thioredoxin domain is found at 1 to 157; sequence MKLYQKFPET…LLRITKAMIV (157 aa). C45 (cysteine sulfenic acid (-SOH) intermediate) is an active-site residue. R120 contacts substrate.

Belongs to the peroxiredoxin family. Prx6 subfamily. In terms of assembly, homodecamer. Pentamer of dimers that assemble into a ring structure.

The protein resides in the cytoplasm. It catalyses the reaction a hydroperoxide + [thioredoxin]-dithiol = an alcohol + [thioredoxin]-disulfide + H2O. Thiol-specific peroxidase that catalyzes the reduction of hydrogen peroxide and organic hydroperoxides to water and alcohols, respectively. Plays a role in cell protection against oxidative stress by detoxifying peroxides. This chain is Peroxiredoxin 2, found in Sulfuracidifex metallicus (Sulfolobus metallicus).